Consider the following 679-residue polypeptide: UvrABC system protein B (679 aa).

Residues 31–414 (ENLTDGLAHQ…ELEKSGSEII (384 aa)) enclose the Helicase ATP-binding domain. 44-51 (GVTGSGKT) serves as a coordination point for ATP. The Beta-hairpin motif lies at 97–120 (YYDYYQPEAYVPSSDTFIEKDASI). The region spanning 436 to 589 (QVDDLLSEAR…QTKYNEEHGI (154 aa)) is the Helicase C-terminal domain. In terms of domain architecture, UVR spans 639–674 (QQQIKKLEQQMYKFAQDLEFEKAAAIRDQLHQLREQ).

Belongs to the UvrB family. In terms of assembly, forms a heterotetramer with UvrA during the search for lesions. Interacts with UvrC in an incision complex.

The protein localises to the cytoplasm. Its function is as follows. The UvrABC repair system catalyzes the recognition and processing of DNA lesions. A damage recognition complex composed of 2 UvrA and 2 UvrB subunits scans DNA for abnormalities. Upon binding of the UvrA(2)B(2) complex to a putative damaged site, the DNA wraps around one UvrB monomer. DNA wrap is dependent on ATP binding by UvrB and probably causes local melting of the DNA helix, facilitating insertion of UvrB beta-hairpin between the DNA strands. Then UvrB probes one DNA strand for the presence of a lesion. If a lesion is found the UvrA subunits dissociate and the UvrB-DNA preincision complex is formed. This complex is subsequently bound by UvrC and the second UvrB is released. If no lesion is found, the DNA wraps around the other UvrB subunit that will check the other stand for damage. This chain is UvrABC system protein B, found in Haemophilus influenzae (strain ATCC 51907 / DSM 11121 / KW20 / Rd).